Here is a 27-residue protein sequence, read N- to C-terminus: Phospholipase A2 1 (27 aa).

It belongs to the phospholipase A2 family. Group I subfamily. Ca(2+) serves as cofactor. Expressed by the venom gland.

The protein resides in the secreted. The catalysed reaction is a 1,2-diacyl-sn-glycero-3-phosphocholine + H2O = a 1-acyl-sn-glycero-3-phosphocholine + a fatty acid + H(+). Functionally, snake venom phospholipase A2 (PLA2) that inhibits neuromuscular transmission by blocking acetylcholine release from the nerve termini. PLA2 catalyzes the calcium-dependent hydrolysis of the 2-acyl groups in 3-sn-phosphoglycerides. This is Phospholipase A2 1 from Micrurus nigrocinctus (Central American coral snake).